A 177-amino-acid polypeptide reads, in one-letter code: ATP synthase subunit delta (177 aa).

This sequence belongs to the ATPase delta chain family. F-type ATPases have 2 components, F(1) - the catalytic core - and F(0) - the membrane proton channel. F(1) has five subunits: alpha(3), beta(3), gamma(1), delta(1), epsilon(1). F(0) has three main subunits: a(1), b(2) and c(10-14). The alpha and beta chains form an alternating ring which encloses part of the gamma chain. F(1) is attached to F(0) by a central stalk formed by the gamma and epsilon chains, while a peripheral stalk is formed by the delta and b chains.

Its subcellular location is the cell inner membrane. Functionally, f(1)F(0) ATP synthase produces ATP from ADP in the presence of a proton or sodium gradient. F-type ATPases consist of two structural domains, F(1) containing the extramembraneous catalytic core and F(0) containing the membrane proton channel, linked together by a central stalk and a peripheral stalk. During catalysis, ATP synthesis in the catalytic domain of F(1) is coupled via a rotary mechanism of the central stalk subunits to proton translocation. Its function is as follows. This protein is part of the stalk that links CF(0) to CF(1). It either transmits conformational changes from CF(0) to CF(1) or is implicated in proton conduction. This Vibrio cholerae serotype O1 (strain ATCC 39541 / Classical Ogawa 395 / O395) protein is ATP synthase subunit delta.